The sequence spans 311 residues: Ferritin-like catalase Nec2 (311 aa).

The first 25 residues, 1 to 25 (MAFLSNMAMFITMLMFSSMMHPCFS), serve as a signal peptide directing secretion. 3 N-linked (GlcNAc...) asparagine glycosylation sites follow: Asn-128, Asn-257, and Asn-289.

In terms of assembly, forms homomultimers. Observed in all flowers organs; mainly expressed in nectaries and, to a lower extent, in petals and ovules, as well as in stigmas and calyx at low levels.

The catalysed reaction is 2 H2O2 = O2 + 2 H2O. Its function is as follows. Involved in the production of blood-red nectar containing the alkaloid nesocodin and that serves as a visual attractant for pollinator visitation, including vertebrates such as Phelsuma geckos. The nectar is initially acidic and pale yellow, but slowly becomes alkaline before turning into red within 24 hours. Together with NEC1 and NEC3, facilitates the condensation of sinapaldehyde ((E)-3,5-dimethoxy-4-hydroxycinnamaldehyde) and proline to form nesocodin, a pigment with a stable imine bond. Protects nesocodin from degradation by hydrogen peroxide H(2)O(2) by catalyzing the degradation of H(2)O(2) into water H(2)O and dioxygene O(2). This is Ferritin-like catalase Nec2 from Nesocodon mauritianus (Blue Mauritius bellflower).